Reading from the N-terminus, the 469-residue chain is Diaminopimelate decarboxylase (469 aa).

Positions 1 to 23 (MLSTEMPLPTTGSTLLKTPASPS) are disordered. Lys-93 bears the N6-(pyridoxal phosphate)lysine mark. Pyridoxal 5'-phosphate is bound by residues Gly-279 and 321-324 (EPGR). Substrate is bound by residues Arg-324, Arg-361, and Tyr-365. The active-site Proton donor is the Cys-392. Substrate-binding residues include Glu-393 and Tyr-421. Tyr-421 provides a ligand contact to pyridoxal 5'-phosphate.

The protein belongs to the Orn/Lys/Arg decarboxylase class-II family. LysA subfamily. In terms of assembly, homodimer. Pyridoxal 5'-phosphate serves as cofactor.

The catalysed reaction is meso-2,6-diaminopimelate + H(+) = L-lysine + CO2. It participates in amino-acid biosynthesis; L-lysine biosynthesis via DAP pathway; L-lysine from DL-2,6-diaminopimelate: step 1/1. In terms of biological role, specifically catalyzes the decarboxylation of meso-diaminopimelate (meso-DAP) to L-lysine. This chain is Diaminopimelate decarboxylase, found in Synechocystis sp. (strain ATCC 27184 / PCC 6803 / Kazusa).